The chain runs to 142 residues: Hemoglobin subunit alpha-3 (142 aa).

Positions 2–142 (TLTDSDKAAV…VATVLTSKYR (141 aa)) constitute a Globin domain. Residue histidine 59 coordinates O2. Position 88 (histidine 88) interacts with heme b.

Belongs to the globin family. As to quaternary structure, heterotetramer of two alpha chains and two beta chains. Red blood cells.

This is a larval (tadpole) alpha-globin. In Xenopus laevis (African clawed frog), this protein is Hemoglobin subunit alpha-3 (hba3).